The sequence spans 845 residues: MGKQQKKHSKGRLDRYYYLAKEKGYRARSSFKIIQINEKYGHFLEKSKVVIDLCAAPGSWCQVASQLCPINSLIIGVDIVPIKPLPNVITFQSDITTEDCRSRLRGHMKTWKADTVLHDGAPNVGLGWVQDAFTQSQLTLQALKLAVENLTAGGTFVTKIFRSRDYNNLMWVFQQLFEKVEATKPPASRNVSAEIFVVCKGFKAPKKLDPRLLDPKEVFEELGGGNESKQNNEAKIFNPEKFSSQRQRQGYQEGDYTLFHTMPIMDFIKQDDPINQLGSLNKFDLPAPKDDDNDDDDHDHEWKILSKLKLCTPELLECIKDLKVLGRKEFKMILKFRKQARDILGIDKDEKEEEEENPKIEVEPLTEEQKIDQELQDLINKQKQKAKRLKKNANELKQKEIIRNQMNMLTDMNIGIEAAQIGADSLFNLKTAEKTGQLDKLAKGKKKMIFNDEELAKDNEIHIDEEEINDNDKDSADELDELENQLDDMYHQYQARKAERDANYRAKQARGDADDEAWNGIEEDNDDVESGKDYEMESESDDDDDEHIRLIAEKKSNGSLSRTARNFFASDSIFNELSDDVILEEIENKTKGSNGKMVESIQEQVANDNNENDDGDNDEEESDFEIVPNQKSDDDDDDESMNSDDDEVSTTTKSTTHQQKVDLATVEAMTLAHQVALGQKNKYDLIDEGINRYSFRDKDNLPDWFIDDEKKHSKLIKPITKEAAIAIKEKQKQLNARPIKKVLEAQSRKKLRALKRLEKIKKKSDLINEDSGKSERDKADEISKLMKKLNKKQKQKPKTTVVVARGSNRGLSGRPKGVKGKYKMVDGVMKNEQRALKRIAKKYKK.

Gly-58, Trp-60, Asp-78, Asp-94, and Asp-119 together coordinate S-adenosyl-L-methionine. The active-site Proton acceptor is the Lys-159. Disordered stretches follow at residues 223–247 and 279–298; these read GGGN…SQRQ and SLNK…DDDH. Coiled coils occupy residues 366–402 and 464–502; these read TEEQ…KEII and DEEE…ERDA. The span at 496 to 512 shows a compositional bias: basic and acidic residues; sequence RKAERDANYRAKQARGD. Disordered stretches follow at residues 496-546, 587-660, and 788-821; these read RKAE…DDDE, ENKT…HQQK, and KLNK…VKGK. Composition is skewed to acidic residues over residues 513–528, 536–545, 610–624, and 633–648; these read ADDE…NDDV, MESESDDDDD, NEND…ESDF, and DDDD…DDEV. The stretch at 739-796 forms a coiled coil; sequence IKKVLEAQSRKKLRALKRLEKIKKKSDLINEDSGKSERDKADEISKLMKKLNKKQKQK. A compositionally biased stretch (basic residues) spans 788-797; it reads KLNKKQKQKP.

It belongs to the class I-like SAM-binding methyltransferase superfamily. RNA methyltransferase RlmE family. SPB1 subfamily. In terms of assembly, component of the nucleolar and nucleoplasmic pre-60S ribosomal particle.

The protein localises to the nucleus. Its subcellular location is the nucleolus. The enzyme catalyses a ribonucleotide in rRNA + S-adenosyl-L-methionine = a 2'-O-methylribonucleotide in rRNA + S-adenosyl-L-homocysteine + H(+). Its function is as follows. Required for proper assembly of pre-ribosomal particles during the biogenesis of the 60S ribosomal subunit. In Candida albicans (strain SC5314 / ATCC MYA-2876) (Yeast), this protein is AdoMet-dependent rRNA methyltransferase SPB1.